The primary structure comprises 751 residues: ABC transporter G family member 22 (751 aa).

The disordered stretch occupies residues 26-81 (ADIRSPHGSMDANGVPATAPAAVGGGGTLSRKSSRRLMGMSPGRSSGAGTHIRKSR). In terms of domain architecture, ABC transporter spans 157 to 403 (LKFRDVTYKV…FSSIGCSPLI (247 aa)). 197–204 (GPSGSGKT) is a binding site for ATP. Residues 498–707 (EQYCILFCRG…TYKLLLKVQY (210 aa)) form the ABC transmembrane type-2 domain. A run of 6 helical transmembrane segments spans residues 516–536 (FSWL…LLWW), 552–572 (LLFF…IFAF), 602–622 (LPLD…MTGL), 634–654 (LTVF…GAIL), 666–686 (VTVM…PVFI), and 722–742 (GLTE…LAYL).

It belongs to the ABC transporter superfamily. ABCG family. Eye pigment precursor importer (TC 3.A.1.204) subfamily.

Its subcellular location is the membrane. The sequence is that of ABC transporter G family member 22 (ABCG22) from Arabidopsis thaliana (Mouse-ear cress).